We begin with the raw amino-acid sequence, 95 residues long: Protein TusB (95 aa).

It belongs to the DsrH/TusB family. In terms of assembly, heterohexamer, formed by a dimer of trimers. The hexameric TusBCD complex contains 2 copies each of TusB, TusC and TusD. The TusBCD complex interacts with TusE.

Its subcellular location is the cytoplasm. Part of a sulfur-relay system required for 2-thiolation of 5-methylaminomethyl-2-thiouridine (mnm(5)s(2)U) at tRNA wobble positions. This is Protein TusB from Escherichia coli (strain K12 / MC4100 / BW2952).